The sequence spans 239 residues: Ribonuclease Le2 (239 aa).

5 cysteine pairs are disulfide-bonded: cysteine 5-cysteine 22, cysteine 13-cysteine 58, cysteine 21-cysteine 126, cysteine 66-cysteine 118, and cysteine 191-cysteine 225. Residues histidine 51, glutamate 111, and histidine 115 contribute to the active site.

Belongs to the RNase T2 family.

The enzyme catalyses a ribonucleotidyl-ribonucleotide-RNA + H2O = a 3'-end 3'-phospho-ribonucleotide-RNA + a 5'-end dephospho-ribonucleoside-RNA + H(+). Its function is as follows. This is a base non-specific and adenylic acid preferential ribonuclease. This chain is Ribonuclease Le2, found in Lentinula edodes (Shiitake mushroom).